A 698-amino-acid polypeptide reads, in one-letter code: Serine/alanine racemase (698 aa).

At 1–10 the chain is on the cytoplasmic side; the sequence is MKNKGIDQFR. Residues 11–31 traverse the membrane as a helical segment; that stretch reads VIAAMMVVAIHCLPLHYLWPE. At 32 to 42 the chain is on the extracellular side; it reads GDILITLTIFR. A helical transmembrane segment spans residues 43-63; it reads VAVPFFFMISGYYVFAELAVA. Residues 64–81 are Cytoplasmic-facing; it reads NSYPSRQRVFNFIKKQLK. A helical membrane pass occupies residues 82–102; it reads VYLLATLMFLPLALYSQTIGF. The Extracellular segment spans residues 103 to 121; it reads DLPVGTLVQVLLVNGILYH. The helical transmembrane segment at 122 to 142 threads the bilayer; that stretch reads LWYFPALITGSLLLTSLLIHV. Over 143 to 147 the chain is Cytoplasmic; the sequence is SFKKV. Residues 148-168 form a helical membrane-spanning segment; sequence FWLAAGLYLIGLGGDSWFGLI. Residues 169–183 are Extracellular-facing; the sequence is QQTPIEPFYTAVFHL. Residues 184-204 traverse the membrane as a helical segment; it reads LDGTRNGIFFTPLFLCLGVLV. Topologically, residues 205–216 are cytoplasmic; that stretch reads RKQSEKRSLSKT. Residues 217–237 form a helical membrane-spanning segment; sequence ALFFLISLIGLLIESAYLHGF. Residues 238 to 244 lie on the Extracellular side of the membrane; sequence SIPKHDS. A helical transmembrane segment spans residues 245-265; that stretch reads MYLFLPVVLFFLFPLILRWHP. The Cytoplasmic segment spans residues 266–274; sequence HRTWKHPGQ. A helical membrane pass occupies residues 275 to 295; it reads LSLWLYLLHPYTIAGTHFLSQ. At 296–301 the chain is on the extracellular side; sequence KISILQ. Residues 302–322 form a helical membrane-spanning segment; sequence NNLINYLVVLILTIGFICLFL. At 323 to 698 the chain is on the cytoplasmic side; the sequence is RQKHSWFRHK…IGPRVSARIK (376 aa). The tract at residues 332–698 is racemase; that stretch reads KQTTPVKRAV…IGPRVSARIK (367 aa). K371 (proton acceptor) is an active-site residue. K371 carries the post-translational modification N6-(pyridoxal phosphate)lysine. Substrate is bound at residue R465. Y597 acts as the Proton acceptor in catalysis. M646 serves as a coordination point for substrate.

This sequence in the N-terminal section; belongs to the acyltransferase 3 family. The protein in the C-terminal section; belongs to the alanine racemase family. In terms of assembly, homodimer. The cofactor is pyridoxal 5'-phosphate.

The protein resides in the cell membrane. The catalysed reaction is L-alanine = D-alanine. The enzyme catalyses L-serine = D-serine. The protein operates within amino-acid biosynthesis; D-alanine biosynthesis; D-alanine from L-alanine: step 1/1. Its function is as follows. Catalyzes the interconversion of L-serine and D-serine, and L-alanine and D-alanine. L-alanine is racemized at a rate that is 14% of that of L-serine. Together with VanC/VanC1 and VanXYC, required for vancomycin resistance in E.gallinarum strain BM4174. This is Serine/alanine racemase from Enterococcus gallinarum.